A 555-amino-acid chain; its full sequence is Dihydroxy-acid dehydratase (555 aa).

Position 78 (aspartate 78) interacts with Mg(2+). A [2Fe-2S] cluster-binding site is contributed by cysteine 119. Mg(2+)-binding residues include aspartate 120 and lysine 121. N6-carboxylysine is present on lysine 121. Residue cysteine 195 participates in [2Fe-2S] cluster binding. Glutamate 444 provides a ligand contact to Mg(2+). Residue serine 470 is the Proton acceptor of the active site.

The protein belongs to the IlvD/Edd family. As to quaternary structure, homodimer. Requires [2Fe-2S] cluster as cofactor. The cofactor is Mg(2+).

The catalysed reaction is (2R)-2,3-dihydroxy-3-methylbutanoate = 3-methyl-2-oxobutanoate + H2O. The enzyme catalyses (2R,3R)-2,3-dihydroxy-3-methylpentanoate = (S)-3-methyl-2-oxopentanoate + H2O. The protein operates within amino-acid biosynthesis; L-isoleucine biosynthesis; L-isoleucine from 2-oxobutanoate: step 3/4. It functions in the pathway amino-acid biosynthesis; L-valine biosynthesis; L-valine from pyruvate: step 3/4. In terms of biological role, functions in the biosynthesis of branched-chain amino acids. Catalyzes the dehydration of (2R,3R)-2,3-dihydroxy-3-methylpentanoate (2,3-dihydroxy-3-methylvalerate) into 2-oxo-3-methylpentanoate (2-oxo-3-methylvalerate) and of (2R)-2,3-dihydroxy-3-methylbutanoate (2,3-dihydroxyisovalerate) into 2-oxo-3-methylbutanoate (2-oxoisovalerate), the penultimate precursor to L-isoleucine and L-valine, respectively. This is Dihydroxy-acid dehydratase from Dehalococcoides mccartyi (strain ATCC BAA-2266 / KCTC 15142 / 195) (Dehalococcoides ethenogenes (strain 195)).